The chain runs to 256 residues: Necrosis-inducing protein NPP1 (256 aa).

Residues 111–121 carry the Conserved undecapeptide motif motif; that stretch reads AIMYAWYFPKG. A Conserved heptapeptide motif motif is present at residues 133–139; the sequence is GHRHEWE.

This sequence belongs to the Necrosis inducing protein (NPP1) family.

The protein resides in the secreted. Its function is as follows. Secreted effector that acts as a pathogen-associated molecular pattern (PAMP) recognized by the plant immune system. This Phytophthora cinnamomi (Cinnamon fungus) protein is Necrosis-inducing protein NPP1.